Reading from the N-terminus, the 83-residue chain is Large ribosomal subunit protein bL27 (83 aa).

It belongs to the bacterial ribosomal protein bL27 family.

This is Large ribosomal subunit protein bL27 from Thermotoga neapolitana (strain ATCC 49049 / DSM 4359 / NBRC 107923 / NS-E).